We begin with the raw amino-acid sequence, 255 residues long: tRNA (guanine-N(7)-)-methyltransferase (255 aa).

The disordered stretch occupies residues 1–37; the sequence is MTAAASDPHNPRSSADDTASPRCESGQGSFFGRRKGH. The S-adenosyl-L-methionine site is built by E80, E105, D132, and D154. D154 is a catalytic residue. Substrate contacts are provided by K158 and D190.

It belongs to the class I-like SAM-binding methyltransferase superfamily. TrmB family.

The catalysed reaction is guanosine(46) in tRNA + S-adenosyl-L-methionine = N(7)-methylguanosine(46) in tRNA + S-adenosyl-L-homocysteine. It functions in the pathway tRNA modification; N(7)-methylguanine-tRNA biosynthesis. Its function is as follows. Catalyzes the formation of N(7)-methylguanine at position 46 (m7G46) in tRNA. This Nitrobacter hamburgensis (strain DSM 10229 / NCIMB 13809 / X14) protein is tRNA (guanine-N(7)-)-methyltransferase.